The following is a 450-amino-acid chain: Vimentin beta (450 aa).

Residues 1–81 form a head region; sequence MSSRTSTSSY…FGLADAINTE (81 aa). The segment covering 24–38 has biased composition (polar residues); the sequence is STYSSRQYSSPGRTT. The disordered stretch occupies residues 24–56; that stretch reads STYSSRQYSSPGRTTSRVSYSSASSTSPSLYMS. A compositionally biased stretch (low complexity) spans 39 to 56; that stretch reads SRVSYSSASSTSPSLYMS. The interval 82–117 is coil 1A; that stretch reads FKANRTNEKAEMQHVNDRFASYIEEVRFLEQQNKIL. In terms of domain architecture, IF rod spans 89-397; that stretch reads EKAEMQHVND…NLLEGEEYRI (309 aa). The tract at residues 118–139 is linker 1; it reads TAELEQMRGKGSSRVGDLYEDE. The tract at residues 140 to 231 is coil 1B; it reads MRELRRQVDQ…KLHDEELAEL (92 aa). The interval 232–254 is linker 12; that stretch reads QMQIQERHVQIDMEVAKPDLTAA. The tract at residues 255–393 is coil 2; that stretch reads LRDVRQQYET…ATYRNLLEGE (139 aa). The interval 394–450 is tail; that stretch reads EYRITTPFPNLSSLSLRESMKEIRPAMDSLSKKVVIKTIETRDGHIINQSTQKDNLE.

Belongs to the intermediate filament family. As to quaternary structure, homomer. In terms of processing, one of the most prominent phosphoproteins in various cells of mesenchymal origin. Phosphorylation is enhanced during cell division, at which time vimentin filaments are significantly reorganized. Expressed in low amounts in retina, optic nerve, brain, and spinal cord and in very high amounts in eye lens.

Its function is as follows. Vimentins are class-III intermediate filaments found in various non-epithelial cells, especially mesenchymal cells. Vimentin is attached to the nucleus, endoplasmic reticulum, and mitochondria, either laterally or terminally. The chain is Vimentin beta from Carassius auratus (Goldfish).